The following is a 516-amino-acid chain: Rho guanine nucleotide exchange factor 9 (516 aa).

Positions 8 to 67 (DSIVSAEAVWDHVTMANRELAFKAGDVIKVLDASNKDWWWGQIDDEEGWFPASFVRLWVN) constitute an SH3 domain. The tract at residues 100–110 (RDQMRANVINE) is interaction with GPHN. The DH domain occupies 103 to 287 (MRANVINEIM…RNVTQQINER (185 aa)). Residues 318–425 (ELIYTGEMAW…WLRAFREERK (108 aa)) form the PH domain. Residues 453–480 (PKQKGVNSARSVPPSYPPPQDPLNHGQY) are disordered. A Phosphoserine modification is found at serine 502.

As to quaternary structure, interacts with GPHN. As to expression, detected in brain. Detected at low levels in heart.

Its subcellular location is the cytoplasm. It localises to the postsynaptic density. In terms of biological role, acts as a guanine nucleotide exchange factor (GEF) for CDC42. Promotes formation of GPHN clusters. The polypeptide is Rho guanine nucleotide exchange factor 9 (ARHGEF9) (Homo sapiens (Human)).